The chain runs to 204 residues: Octanoyltransferase (204 aa).

In terms of domain architecture, BPL/LPL catalytic spans 27–202 (QGGEEALLLL…RFQPFLHLHL (176 aa)). Residues 65–72 (RGGDVTYH), 132–134 (SIG), and 145–147 (GFA) each bind substrate. Cys163 functions as the Acyl-thioester intermediate in the catalytic mechanism.

Belongs to the LipB family.

The protein localises to the cytoplasm. It carries out the reaction octanoyl-[ACP] + L-lysyl-[protein] = N(6)-octanoyl-L-lysyl-[protein] + holo-[ACP] + H(+). It functions in the pathway protein modification; protein lipoylation via endogenous pathway; protein N(6)-(lipoyl)lysine from octanoyl-[acyl-carrier-protein]: step 1/2. Functionally, catalyzes the transfer of endogenously produced octanoic acid from octanoyl-acyl-carrier-protein onto the lipoyl domains of lipoate-dependent enzymes. Lipoyl-ACP can also act as a substrate although octanoyl-ACP is likely to be the physiological substrate. The chain is Octanoyltransferase from Geobacter sp. (strain M21).